A 286-amino-acid chain; its full sequence is ATP synthase gamma chain (286 aa).

Belongs to the ATPase gamma chain family. As to quaternary structure, F-type ATPases have 2 components, CF(1) - the catalytic core - and CF(0) - the membrane proton channel. CF(1) has five subunits: alpha(3), beta(3), gamma(1), delta(1), epsilon(1). CF(0) has three main subunits: a, b and c.

The protein localises to the cell inner membrane. Produces ATP from ADP in the presence of a proton gradient across the membrane. The gamma chain is believed to be important in regulating ATPase activity and the flow of protons through the CF(0) complex. The sequence is that of ATP synthase gamma chain from Alcanivorax borkumensis (strain ATCC 700651 / DSM 11573 / NCIMB 13689 / SK2).